Reading from the N-terminus, the 125-residue chain is Fluoride-specific ion channel FluC (125 aa).

Transmembrane regions (helical) follow at residues 6-26 (GFIA…SGLV), 34-54 (FPWG…LVWE), 68-88 (AVLL…IFES), and 98-118 (LALL…LFAG). Na(+) is bound by residues Gly76 and Thr79.

The protein belongs to the fluoride channel Fluc/FEX (TC 1.A.43) family.

Its subcellular location is the cell inner membrane. The catalysed reaction is fluoride(in) = fluoride(out). With respect to regulation, na(+) is not transported, but it plays an essential structural role and its presence is essential for fluoride channel function. Functionally, fluoride-specific ion channel. Important for reducing fluoride concentration in the cell, thus reducing its toxicity. The sequence is that of Fluoride-specific ion channel FluC from Solidesulfovibrio magneticus (strain ATCC 700980 / DSM 13731 / RS-1) (Desulfovibrio magneticus).